The primary structure comprises 351 residues: UDP-3-O-acylglucosamine N-acyltransferase (351 aa).

The active-site Proton acceptor is the H240.

Belongs to the transferase hexapeptide repeat family. LpxD subfamily. In terms of assembly, homotrimer.

It catalyses the reaction a UDP-3-O-[(3R)-3-hydroxyacyl]-alpha-D-glucosamine + a (3R)-hydroxyacyl-[ACP] = a UDP-2-N,3-O-bis[(3R)-3-hydroxyacyl]-alpha-D-glucosamine + holo-[ACP] + H(+). It functions in the pathway bacterial outer membrane biogenesis; LPS lipid A biosynthesis. Functionally, catalyzes the N-acylation of UDP-3-O-acylglucosamine using 3-hydroxyacyl-ACP as the acyl donor. Is involved in the biosynthesis of lipid A, a phosphorylated glycolipid that anchors the lipopolysaccharide to the outer membrane of the cell. The sequence is that of UDP-3-O-acylglucosamine N-acyltransferase from Pseudomonas entomophila (strain L48).